The chain runs to 145 residues: MKTFLTEQQIKVLVLRAKGLKQSEIARILKTTRANVSILEKRALEKIEKARNTLLLWEQINSKVSVSVKAGEDIFTIPDRLFKEADKAGVKVPYSTAEIIAFLVEHAPIEDRLAKRDFVIFLDSKNRLRISECLINFVEEGIGND.

It belongs to the Tfx family.

Putative transcriptional regulator. The sequence is that of Putative transcriptional regulatory protein PYRAB13000 from Pyrococcus abyssi (strain GE5 / Orsay).